The sequence spans 634 residues: MSVETQKETLGFQTEVKQLLHLMIHSLYSNKEIFLRELISNASDAADKLRFEALANPELLEGGAELKIRVSFDKEANTVTLEDNGIGMSREDVVTHLGTIAKSGTADFLKNLSGDQKKDSHLIGQFGVGFYSAFIVADKVDVYSRRAGQPASEGVHWSSKGEGEFDVATIDKPERGTRIVLHLKKGEEEFADGWRLRNVIKKYSDHIALPIELPKEFHGEEAEKPAEPEWETVNRASALWTRPRAEVKDEEYQEFYKHVAHDFENPLSWSHNKVEGKLEYTSLLYVPGRAPFDLYHREAPRGLKLYVQRVFIMDQADEFLPLYLRFIKGVVDSNDLSLNVSREILQKDPVIDSMKSALTKRVLDMLEKLAKNEPEQYKTFWKNFGQVLKEGPAEDFGNKEKIAGLLRFASTGGDSGEQSVALADYIGRMKEGQDKIYYLTGESYSQVKNSPHLEVFRKKGIEVLLLTDRIDEWLMSYLPDFDGKSFVDVARGDLDLGSLDSEEDKKAQEEVAKSKEGLIERLKKVLDEQASEVRVSHRLTDSPAILAIGEQDLGLQMRQILEASGQKVPESKPIFEINPQHPLIEKLDAEPDEDRFGELSHILFDQAALAAGDSLKDPGAYVRRLNKLLVELSA.

The segment at 1–342 (MSVETQKETL…SNDLSLNVSR (342 aa)) is a; substrate-binding. Residues 343-559 (EILQKDPVID…EQDLGLQMRQ (217 aa)) are b. The tract at residues 560–634 (ILEASGQKVP…LNKLLVELSA (75 aa)) is c.

This sequence belongs to the heat shock protein 90 family. As to quaternary structure, homodimer.

The protein localises to the cytoplasm. In terms of biological role, molecular chaperone. Has ATPase activity. The sequence is that of Chaperone protein HtpG from Pseudomonas paraeruginosa (strain DSM 24068 / PA7) (Pseudomonas aeruginosa (strain PA7)).